The sequence spans 589 residues: Transcription factor atf-6 homolog (589 aa).

Basic and acidic residues predominate over residues 1–16 (MNFDNTVHESNFDDLL). The disordered stretch occupies residues 1–82 (MNFDNTVHES…SSPPLSCANF (82 aa)). Low complexity-rich tracts occupy residues 36–54 (GTDE…FSDQ) and 67–78 (GDSSSDSSPPLS). Residues 250 to 299 (QNRKIRNRMYAQASRMRKKEADEHMKMNLQELLQENEILRTENAALKQRL) enclose the bZIP domain. The tract at residues 252-275 (RKIRNRMYAQASRMRKKEADEHMK) is basic motif. Positions 271 to 305 (DEHMKMNLQELLQENEILRTENAALKQRLAFFEHE) form a coiled coil. Positions 281 to 295 (LLQENEILRTENAAL) are leucine-zipper. The helical transmembrane segment at 324-344 (IIAAGSVLMMFGLFAVISPFN) threads the bilayer.

It belongs to the bZIP family. ATF subfamily.

It localises to the nucleus. It is found in the membrane. In terms of biological role, transcription factor. Plays a role in the unfolded protein response (UPR), perhaps mainly during constitutive endoplasmic reticulum (ER) stress, by activating transcription of genes involved in the UPR. Plays a role in modulating lifespan, acting by positively regulating expression of calcium-binding chaperone crt-1, thereby influencing ER calcium homeostasis. By activating the UPR pathway, confers adaptive protection to subsequent exposure to hypoxia. Involved in protection against proteotoxicity, probably acting via the UPR. Probably acts in the UPR in parallel with the ire-1-xbp-1 and pek-1 pathways. May be regulated by endopeptidase S2P-mediated proteolytic cleavage. The chain is Transcription factor atf-6 homolog from Caenorhabditis elegans.